The sequence spans 181 residues: CDP-diacylglycerol--glycerol-3-phosphate 3-phosphatidyltransferase (181 aa).

Helical transmembrane passes span 8 to 28 (PNYLTIARIMVIPVIILLFYI), 35 to 55 (KLGALLFVLASITDFFDGYIA), 64 to 84 (FGKMFDPIADKLLVGCVTIML), and 148 to 168 (IIYLDIVGEIILWIAAFLTII).

This sequence belongs to the CDP-alcohol phosphatidyltransferase class-I family.

It localises to the cell membrane. The catalysed reaction is a CDP-1,2-diacyl-sn-glycerol + sn-glycerol 3-phosphate = a 1,2-diacyl-sn-glycero-3-phospho-(1'-sn-glycero-3'-phosphate) + CMP + H(+). The protein operates within phospholipid metabolism; phosphatidylglycerol biosynthesis; phosphatidylglycerol from CDP-diacylglycerol: step 1/2. In terms of biological role, this protein catalyzes the committed step to the synthesis of the acidic phospholipids. This is CDP-diacylglycerol--glycerol-3-phosphate 3-phosphatidyltransferase (pgsA) from Rickettsia prowazekii (strain Madrid E).